A 212-amino-acid chain; its full sequence is uncharacterized protein (212 aa).

S-adenosyl-L-methionine is bound by residues Gly53, Glu74, and Asp97.

The protein belongs to the methyltransferase superfamily. YrrT family.

Functionally, could be a S-adenosyl-L-methionine-dependent methyltransferase. This is an uncharacterized protein from Bacillus cereus (strain ZK / E33L).